Consider the following 212-residue polypeptide: Thymidylate kinase (212 aa).

11–18 (GPEGAGKT) serves as a coordination point for ATP.

This sequence belongs to the thymidylate kinase family.

It carries out the reaction dTMP + ATP = dTDP + ADP. Its function is as follows. Phosphorylation of dTMP to form dTDP in both de novo and salvage pathways of dTTP synthesis. The sequence is that of Thymidylate kinase from Streptococcus pneumoniae (strain CGSP14).